Consider the following 405-residue polypeptide: Argininosuccinate synthase (405 aa).

Residues 13–21 (AYSGGLDTS) and A40 contribute to the ATP site. L-citrulline contacts are provided by Y91 and S96. Residue G121 participates in ATP binding. Positions 123, 127, and 128 each coordinate L-aspartate. N127 contacts L-citrulline. Residues R131, S182, S191, E267, and Y279 each contribute to the L-citrulline site.

The protein belongs to the argininosuccinate synthase family. Type 1 subfamily. In terms of assembly, homotetramer.

It localises to the cytoplasm. The enzyme catalyses L-citrulline + L-aspartate + ATP = 2-(N(omega)-L-arginino)succinate + AMP + diphosphate + H(+). It participates in amino-acid biosynthesis; L-arginine biosynthesis; L-arginine from L-ornithine and carbamoyl phosphate: step 2/3. The polypeptide is Argininosuccinate synthase (Rhizobium meliloti (strain 1021) (Ensifer meliloti)).